The primary structure comprises 191 residues: Prostaglandin-H2 D-isomerase (191 aa).

Positions 1-24 (MAALHTLWMGLVLLGVLGVLQTRA) are cleaved as a signal peptide. A Pyrrolidone carboxylic acid modification is found at Gln25. Asn51 is a glycosylation site (N-linked (GlcNAc...) asparagine). Cys65 serves as the catalytic Nucleophile. A glycan (N-linked (GlcNAc...) asparagine) is linked at Asn78. Residues Cys89 and Cys186 are joined by a disulfide bond.

Belongs to the calycin superfamily. Lipocalin family. In terms of assembly, monomer. In terms of processing, N- and O-glycosylated. Both N-glycosylation recognition sites are almost quantitatively occupied by N-glycans of the biantennary complex type, with a considerable proportion of structures bearing a bisecting GlcNAc. N-glycan at Asn-78: dHex1Hex5HexNAc4. Agalacto structure as well as sialylated and nonsialylated oligosaccharides bearing alpha2-3- and/or alpha2-6-linked NeuNAc are present.

The protein localises to the rough endoplasmic reticulum. The protein resides in the nucleus membrane. It is found in the golgi apparatus. It localises to the cytoplasm. Its subcellular location is the perinuclear region. The protein localises to the secreted. The enzyme catalyses prostaglandin H2 = prostaglandin D2. Catalyzes the conversion of PGH2 to PGD2, a prostaglandin involved in smooth muscle contraction/relaxation and a potent inhibitor of platelet aggregation. Involved in a variety of CNS functions, such as sedation, NREM sleep and PGE2-induced allodynia, and may have an anti-apoptotic role in oligodendrocytes. Binds small non-substrate lipophilic molecules, including biliverdin, bilirubin, retinal, retinoic acid and thyroid hormone, and may act as a scavenger for harmful hydrophobic molecules and as a secretory retinoid and thyroid hormone transporter. Possibly involved in development and maintenance of the blood-brain, blood-retina, blood-aqueous humor and blood-testis barrier. It is likely to play important roles in both maturation and maintenance of the central nervous system and male reproductive system. Involved in PLA2G3-dependent maturation of mast cells. PLA2G3 is secreted by immature mast cells and acts on nearby fibroblasts upstream to PTDGS to synthesize PGD2, which in turn promotes mast cell maturation and degranulation via PTGDR. The sequence is that of Prostaglandin-H2 D-isomerase (PTGDS) from Felis catus (Cat).